Consider the following 409-residue polypeptide: Argininosuccinate synthase (409 aa).

ATP is bound by residues 11–19 (AYSGGLDTS) and alanine 38. Residues tyrosine 91 and serine 96 each coordinate L-citrulline. Glycine 121 is a binding site for ATP. L-aspartate contacts are provided by threonine 123, asparagine 127, and aspartate 128. Asparagine 127 contributes to the L-citrulline binding site. Arginine 131, serine 182, serine 191, glutamate 267, and tyrosine 279 together coordinate L-citrulline.

It belongs to the argininosuccinate synthase family. Type 1 subfamily. As to quaternary structure, homotetramer.

The protein localises to the cytoplasm. The catalysed reaction is L-citrulline + L-aspartate + ATP = 2-(N(omega)-L-arginino)succinate + AMP + diphosphate + H(+). Its pathway is amino-acid biosynthesis; L-arginine biosynthesis; L-arginine from L-ornithine and carbamoyl phosphate: step 2/3. The sequence is that of Argininosuccinate synthase from Nitrobacter hamburgensis (strain DSM 10229 / NCIMB 13809 / X14).